The sequence spans 777 residues: Polyribonucleotide nucleotidyltransferase (777 aa).

Mg(2+)-binding residues include aspartate 494 and aspartate 500. A KH domain is found at 561 to 620 (PRIITLQIDPSKIGALIGPGGKTIRSIIEQTGAQIDVEDDGRVFVTTPDADGARMAQSLI). In terms of domain architecture, S1 motif spans 630 to 699 (GEIFTGKVVR…GTGKLSLSRR (70 aa)). The disordered stretch occupies residues 703 to 777 (TGETAEQRKS…NDRRGGGFRG (75 aa)). The span at 718–727 (GPRGGGGGGD) shows a compositional bias: gly residues. 2 stretches are compositionally biased toward basic and acidic residues: residues 728-761 (RGPR…DRGP) and 768-777 (NDRRGGGFRG).

It belongs to the polyribonucleotide nucleotidyltransferase family. Requires Mg(2+) as cofactor.

It is found in the cytoplasm. It catalyses the reaction RNA(n+1) + phosphate = RNA(n) + a ribonucleoside 5'-diphosphate. Its function is as follows. Involved in mRNA degradation. Catalyzes the phosphorolysis of single-stranded polyribonucleotides processively in the 3'- to 5'-direction. The protein is Polyribonucleotide nucleotidyltransferase of Herpetosiphon aurantiacus (strain ATCC 23779 / DSM 785 / 114-95).